The following is a 595-amino-acid chain: Trafficking protein particle complex subunit 14 (595 aa).

Disordered stretches follow at residues 84–111 and 494–513; these read ASVS…ECVE and SNPP…SSPA.

As to quaternary structure, component of the multisubunit TRAPP II complex, which includes at least TRAPPC1, TRAPPC2, TRAPPC2L, TRAPPC3, TRAPPC4, TRAPPC5, TRAPPC6A/B, TRAPPC9, TRAPPC10 and TRAPPC14. TRAPPC9, TRAPPC10 and TRAPPC14 are specific subunits of the TRAPP II complex. Interacts with alpha-tubulin during mitosis.

It localises to the cytoplasm. The protein resides in the cytoskeleton. It is found in the spindle. The protein localises to the vesicle. Its subcellular location is the midbody. In terms of biological role, specific subunit of the TRAPP (transport protein particle) II complex, a highly conserved vesicle tethering complex that functions in late Golgi trafficking as a membrane tether. TRAPP II complex also has GEF activity toward RAB1A. TRAPPC14 is required for ciliogenesis. This Danio rerio (Zebrafish) protein is Trafficking protein particle complex subunit 14 (trappc14).